The primary structure comprises 208 residues: Small ribosomal subunit protein uS4 (208 aa).

Positions 98–164 (TRLDNVVYRL…PKVKSIREIA (67 aa)) constitute an S4 RNA-binding domain.

The protein belongs to the universal ribosomal protein uS4 family. Part of the 30S ribosomal subunit. Contacts protein S5. The interaction surface between S4 and S5 is involved in control of translational fidelity.

In terms of biological role, one of the primary rRNA binding proteins, it binds directly to 16S rRNA where it nucleates assembly of the body of the 30S subunit. Functionally, with S5 and S12 plays an important role in translational accuracy. This chain is Small ribosomal subunit protein uS4, found in Ruminiclostridium cellulolyticum (strain ATCC 35319 / DSM 5812 / JCM 6584 / H10) (Clostridium cellulolyticum).